A 66-amino-acid chain; its full sequence is Large ribosomal subunit protein bL32 (66 aa).

Basic residues predominate over residues 1 to 18; sequence MAIVPKRKTSKQRKHKRR. Residues 1 to 21 are disordered; the sequence is MAIVPKRKTSKQRKHKRRTND.

It belongs to the bacterial ribosomal protein bL32 family.

The protein is Large ribosomal subunit protein bL32 of Mycoplasmopsis agalactiae (strain NCTC 10123 / CIP 59.7 / PG2) (Mycoplasma agalactiae).